The following is a 246-amino-acid chain: tRNA (guanine-N(1)-)-methyltransferase (246 aa).

Residues Gly113 and 133-138 (IGDYVL) contribute to the S-adenosyl-L-methionine site.

It belongs to the RNA methyltransferase TrmD family. As to quaternary structure, homodimer.

It is found in the cytoplasm. The enzyme catalyses guanosine(37) in tRNA + S-adenosyl-L-methionine = N(1)-methylguanosine(37) in tRNA + S-adenosyl-L-homocysteine + H(+). Functionally, specifically methylates guanosine-37 in various tRNAs. This chain is tRNA (guanine-N(1)-)-methyltransferase, found in Haemophilus influenzae (strain 86-028NP).